The primary structure comprises 107 residues: Heme-degrading monooxygenase (107 aa).

Residues 2–93 form the ABM domain; it reads VIVANKTLIR…DYILGNEIEF (92 aa). A Fe cation-binding site is contributed by N6. H76 contacts heme.

The protein belongs to the antibiotic biosynthesis monooxygenase family. Heme-degrading monooxygenase IsdG subfamily. Homodimer.

The protein resides in the cytoplasm. It carries out the reaction heme b + 3 reduced [NADPH--hemoprotein reductase] + 3 O2 = biliverdin IXalpha + CO + Fe(2+) + 3 oxidized [NADPH--hemoprotein reductase] + 3 H2O + H(+). Functionally, allows bacterial pathogens to use the host heme as an iron source. Catalyzes the oxidative degradation of the heme macrocyclic porphyrin ring to the biliverdin in the presence of a suitable electron donor such as ascorbate or NADPH--cytochrome P450 reductase, with subsequent release of free iron. This Shouchella clausii (strain KSM-K16) (Alkalihalobacillus clausii) protein is Heme-degrading monooxygenase.